Here is a 561-residue protein sequence, read N- to C-terminus: DNA mismatch repair protein MutL (561 aa).

This sequence belongs to the DNA mismatch repair MutL/HexB family.

Functionally, this protein is involved in the repair of mismatches in DNA. It is required for dam-dependent methyl-directed DNA mismatch repair. May act as a 'molecular matchmaker', a protein that promotes the formation of a stable complex between two or more DNA-binding proteins in an ATP-dependent manner without itself being part of a final effector complex. This is DNA mismatch repair protein MutL from Rippkaea orientalis (strain PCC 8801 / RF-1) (Cyanothece sp. (strain PCC 8801)).